Consider the following 77-residue polypeptide: MFHQAKSPTHSTLTNFLRTALILFPLFCGEYILTSGSMSNRTASSDKHPSIKPSAISNFARISPSSTRRRRAMARFE.

The interval 58–77 is disordered; that stretch reads NFARISPSSTRRRRAMARFE. The segment covering 67-77 has biased composition (basic residues); sequence TRRRRAMARFE.

The chain is Putative protein p6 (6) from Acyrthosiphon pisum secondary endosymbiont phage 1 (Bacteriophage APSE-1).